A 490-amino-acid polypeptide reads, in one-letter code: GTPase Der (490 aa).

2 EngA-type G domains span residues 3–167 (FTLA…DAFE) and 203–378 (LQVA…EVWN). Residues 9–16 (GRPNVGKS), 56–60 (DTAGL), 119–122 (NKAE), 209–216 (GRPNAGKS), 256–260 (DTAGM), and 321–324 (NKWD) each bind GTP. The KH-like domain occupies 379-465 (RRVPTAALNR…RLTMRSQSDA (87 aa)). The interval 451-490 (PGTPIRLTMRSQSDANPYKNRKKSTPSRLRKHLGKPSLKG) is disordered. Positions 469–484 (KNRKKSTPSRLRKHLG) are enriched in basic residues.

Belongs to the TRAFAC class TrmE-Era-EngA-EngB-Septin-like GTPase superfamily. EngA (Der) GTPase family. Associates with the 50S ribosomal subunit.

Its function is as follows. GTPase that plays an essential role in the late steps of ribosome biogenesis. This Dinoroseobacter shibae (strain DSM 16493 / NCIMB 14021 / DFL 12) protein is GTPase Der.